Consider the following 444-residue polypeptide: tRNA modification GTPase MnmE (444 aa).

R25, E83, and K122 together coordinate (6S)-5-formyl-5,6,7,8-tetrahydrofolate. The region spanning 218–370 (GFKVAIVGKP…IVGRLRDYLD (153 aa)) is the TrmE-type G domain. GTP-binding positions include 228 to 233 (NVGKSS), 247 to 253 (SDEAGTT), and 272 to 275 (DTAG). Mg(2+)-binding residues include S232 and T253. A (6S)-5-formyl-5,6,7,8-tetrahydrofolate-binding site is contributed by K444.

Belongs to the TRAFAC class TrmE-Era-EngA-EngB-Septin-like GTPase superfamily. TrmE GTPase family. Homodimer. Heterotetramer of two MnmE and two MnmG subunits. K(+) serves as cofactor.

It is found in the cytoplasm. In terms of biological role, exhibits a very high intrinsic GTPase hydrolysis rate. Involved in the addition of a carboxymethylaminomethyl (cmnm) group at the wobble position (U34) of certain tRNAs, forming tRNA-cmnm(5)s(2)U34. The polypeptide is tRNA modification GTPase MnmE (Campylobacter curvus (strain 525.92)).